The following is a 456-amino-acid chain: Keratin, type I cuticular Ha8 (456 aa).

Residues 1-104 (MTSSYSSSSC…YGENTLNGHE (104 aa)) are head. The 312-residue stretch at 104–415 (EKETMQFLND…NLLESEDCKL (312 aa)) folds into the IF rod domain. The segment at 105–139 (KETMQFLNDRLANYLEKVRQLEQENAELEATLLER) is coil 1A. Positions 140–150 (SKCHESTVCPD) are linker 1. The interval 151 to 251 (YQSYFHTIEE…HEQEVKILRS (101 aa)) is coil 1B. The linker 12 stretch occupies residues 252–267 (QLGEKLRIELDIEPTI). Residues 268–411 (DLNRVLGEMR…ATYRNLLESE (144 aa)) form a coil 2 region. Positions 412-456 (DCKLPCNPCSTSPSCVTAPCAPRPSCGPCTTCGPTCGASTTGSRF) are tail.

It belongs to the intermediate filament family.

The sequence is that of Keratin, type I cuticular Ha8 (KRT38) from Homo sapiens (Human).